The primary structure comprises 291 residues: 4-hydroxy-tetrahydrodipicolinate synthase (291 aa).

Pyruvate is bound at residue threonine 47. Residue tyrosine 134 is the Proton donor/acceptor of the active site. The active-site Schiff-base intermediate with substrate is lysine 162. Isoleucine 205 contacts pyruvate.

It belongs to the DapA family. As to quaternary structure, homotetramer; dimer of dimers.

It is found in the cytoplasm. It carries out the reaction L-aspartate 4-semialdehyde + pyruvate = (2S,4S)-4-hydroxy-2,3,4,5-tetrahydrodipicolinate + H2O + H(+). It functions in the pathway amino-acid biosynthesis; L-lysine biosynthesis via DAP pathway; (S)-tetrahydrodipicolinate from L-aspartate: step 3/4. Functionally, catalyzes the condensation of (S)-aspartate-beta-semialdehyde [(S)-ASA] and pyruvate to 4-hydroxy-tetrahydrodipicolinate (HTPA). This Methanospirillum hungatei JF-1 (strain ATCC 27890 / DSM 864 / NBRC 100397 / JF-1) protein is 4-hydroxy-tetrahydrodipicolinate synthase.